The following is a 231-amino-acid chain: NADH-ubiquinone oxidoreductase chain 4 (231 aa).

7 consecutive transmembrane segments (helical) span residues 1–21 (PIAGSMVLAAILLKLGGYGII), 34–54 (LFIPFIVLALWGATLANLTCL), 61–80 (SLIAYSSISHMGLVVAAVII), 84–106 (WGLSGAMALMIAHGFTSSALFCL), 118–138 (ILILTRGFHNILPMATTWWLL), 156–176 (LLIVSTLFNWCPTTIIMLGLS), and 211–231 (LLMILHIIPLLMISMKPELVI).

It belongs to the complex I subunit 4 family.

Its subcellular location is the mitochondrion membrane. The enzyme catalyses a ubiquinone + NADH + 5 H(+)(in) = a ubiquinol + NAD(+) + 4 H(+)(out). Functionally, core subunit of the mitochondrial membrane respiratory chain NADH dehydrogenase (Complex I) that is believed to belong to the minimal assembly required for catalysis. Complex I functions in the transfer of electrons from NADH to the respiratory chain. The immediate electron acceptor for the enzyme is believed to be ubiquinone. The sequence is that of NADH-ubiquinone oxidoreductase chain 4 (MT-ND4) from Hypnale hypnale (Merrem's hump-nosed viper).